Reading from the N-terminus, the 1382-residue chain is Hepatocyte growth factor receptor (1382 aa).

An N-terminal signal peptide occupies residues 1-24; that stretch reads MKAPAVLAPGILVLLFTLVPRSHG. At 25 to 933 the chain is on the extracellular side; sequence ECKEALVKSE…VIVQPDQNFM (909 aa). A Sema domain is found at 27–516; it reads KEALVKSEMN…TGNKITKIPL (490 aa). Residue N45 is glycosylated (N-linked (GlcNAc...) asparagine). 4 disulfides stabilise this stretch: C95–C101, C98–C160, C133–C141, and C173–C176. N106 is a glycosylation site (N-linked (GlcNAc...) asparagine). N-linked (GlcNAc...) asparagine glycans are attached at residues N203 and N359. Disulfide bonds link C299-C364 and C386-C398. Residues N400 and N406 are each glycosylated (N-linked (GlcNAc...) asparagine). Intrachain disulfides connect C521–C539, C527–C562, C530–C546, and C542–C552. IPT/TIG domains follow at residues 564–656, 658–740, and 743–837; these read PAIY…FSYV, PVIT…FSYR, and PIVD…LTYV. The O-linked (Man) threonine glycan is linked to T583. Residues N608, N614, and N636 are each glycosylated (N-linked (GlcNAc...) asparagine). O-linked (Man) threonine glycans are attached at residues T677 and T762. 2 N-linked (GlcNAc...) asparagine glycosylation sites follow: N786 and N880. A helical membrane pass occupies residues 934-956; the sequence is GLIVGGVSISIILLLLLGLFLWL. The Cytoplasmic portion of the chain corresponds to 957-1382; sequence KKKKRIKDLG…QDNVDGTVDT (426 aa). Phosphoserine is present on S967. Position 978 is a phosphothreonine (T978). Phosphoserine is present on residues S991, S998, and S1001. Residue Y1004 is modified to Phosphotyrosine. The Protein kinase domain maps to 1079-1346; the sequence is VHFSEVIGRG…RISTIFSTFI (268 aa). Residues 1085-1093 and K1111 contribute to the ATP site; that span reads IGRGHFGCV. D1205 (proton acceptor) is an active-site residue. The tract at residues 1213 to 1382 is interaction with RANBP9; the sequence is LDEKFTVKVA…QDNVDGTVDT (170 aa). Y1231 carries the phosphotyrosine modification. A phosphotyrosine; by autocatalysis mark is found at Y1235 and Y1236. A Phosphothreonine modification is found at T1290. Residues 1321 to 1360 are interaction with MUC20; sequence WHPKAEMRPSFSELVSRISTIFSTFIGEHYVHVNATYVNV. A phosphotyrosine; by autocatalysis mark is found at Y1350 and Y1357. A Phosphotyrosine modification is found at Y1366.

It belongs to the protein kinase superfamily. Tyr protein kinase family. In terms of assembly, heterodimer made of an alpha chain (50 kDa) and a beta chain (145 kDa) which are disulfide linked. Binds PLXNB1. Interacts when phosphorylated with downstream effectors including STAT3, PIK3R1, SRC, PCLG1, GRB2 and GAB1. Interacts with SPSB1, SPSB2 and SPSB4. Interacts with INPP5D/SHIP1. When phosphorylated at Tyr-1357, interacts with INPPL1/SHIP2. Interacts with RANBP9 and RANBP10, as well as SPSB1, SPSB2, SPSB3 and SPSB4. SPSB1 binding occurs in the presence and in the absence of HGF, however HGF treatment has a positive effect on this interaction. Interacts with MUC20; prevents interaction with GRB2 and suppresses hepatocyte growth factor-induced cell proliferation. Interacts with GRB10. Interacts with PTPN1 and PTPN2. Interacts with HSP90AA1 and HSP90AB1; the interaction suppresses MET kinase activity. Interacts with tensin TNS3. Interacts (when phosphorylated) with tensin TNS4 (via SH2 domain); the interaction increases MET protein stability by inhibiting MET endocytosis and subsequent lysosomal degradation. Autophosphorylated in response to ligand binding on Tyr-1235 and Tyr-1236 in the kinase domain leading to further phosphorylation of Tyr-1350 and Tyr-1357 in the C-terminal multifunctional docking site. Dephosphorylated by PTPRJ at Tyr-1350 and Tyr-1366. Dephosphorylated by PTPN1 and PTPN2. Post-translationally, ubiquitinated. Ubiquitination by CBL regulates the receptor stability and activity through proteasomal degradation. In terms of processing, O-mannosylation of IPT/TIG domains by TMEM260 is required for protein maturation. O-mannosylated residues are composed of single mannose glycans that are not elongated or modified.

The protein resides in the membrane. The enzyme catalyses L-tyrosyl-[protein] + ATP = O-phospho-L-tyrosyl-[protein] + ADP + H(+). Its activity is regulated as follows. In its inactive state, the C-terminal tail interacts with the catalytic domain and inhibits the kinase activity. Upon ligand binding, the C-terminal tail is displaced and becomes phosphorylated, thus increasing the kinase activity. In terms of biological role, receptor tyrosine kinase that transduces signals from the extracellular matrix into the cytoplasm by binding to hepatocyte growth factor/HGF ligand. Regulates many physiological processes including proliferation, scattering, morphogenesis and survival. Ligand binding at the cell surface induces autophosphorylation of MET on its intracellular domain that provides docking sites for downstream signaling molecules. Following activation by ligand, interacts with the PI3-kinase subunit PIK3R1, PLCG1, SRC, GRB2, STAT3 or the adapter GAB1. Recruitment of these downstream effectors by MET leads to the activation of several signaling cascades including the RAS-ERK, PI3 kinase-AKT, or PLCgamma-PKC. The RAS-ERK activation is associated with the morphogenetic effects while PI3K/AKT coordinates prosurvival effects. During embryonic development, MET signaling plays a role in gastrulation, development and migration of muscles and neuronal precursors, angiogenesis and kidney formation. In adults, participates in wound healing as well as organ regeneration and tissue remodeling. Also promotes differentiation and proliferation of hematopoietic cells. This is Hepatocyte growth factor receptor (MET) from Oryctolagus cuniculus (Rabbit).